We begin with the raw amino-acid sequence, 200 residues long: 3-isopropylmalate dehydratase small subunit (200 aa).

It belongs to the LeuD family. LeuD type 1 subfamily. In terms of assembly, heterodimer of LeuC and LeuD.

It catalyses the reaction (2R,3S)-3-isopropylmalate = (2S)-2-isopropylmalate. The protein operates within amino-acid biosynthesis; L-leucine biosynthesis; L-leucine from 3-methyl-2-oxobutanoate: step 2/4. Catalyzes the isomerization between 2-isopropylmalate and 3-isopropylmalate, via the formation of 2-isopropylmaleate. The protein is 3-isopropylmalate dehydratase small subunit of Campylobacter jejuni subsp. doylei (strain ATCC BAA-1458 / RM4099 / 269.97).